The sequence spans 124 residues: uncharacterized protein (124 aa).

Not required for the biogenesis of c-type cytochromes. This is an uncharacterized protein from Rhodobacter capsulatus (strain ATCC BAA-309 / NBRC 16581 / SB1003).